A 510-amino-acid chain; its full sequence is Histidine ammonia-lyase (510 aa).

Positions 143-145 (ASG) form a cross-link, 5-imidazolinone (Ala-Gly). S144 is subject to 2,3-didehydroalanine (Ser).

Belongs to the PAL/histidase family. In terms of processing, contains an active site 4-methylidene-imidazol-5-one (MIO), which is formed autocatalytically by cyclization and dehydration of residues Ala-Ser-Gly.

The protein localises to the cytoplasm. It catalyses the reaction L-histidine = trans-urocanate + NH4(+). The protein operates within amino-acid degradation; L-histidine degradation into L-glutamate; N-formimidoyl-L-glutamate from L-histidine: step 1/3. This Shewanella sediminis (strain HAW-EB3) protein is Histidine ammonia-lyase.